We begin with the raw amino-acid sequence, 342 residues long: Serine/threonine-protein kinase-transforming protein mos (342 aa).

The 276-residue stretch at Val63–Arg338 folds into the Protein kinase domain. ATP is bound by residues Leu69–Val77 and Lys90. The active-site Proton acceptor is the Asp198.

This sequence belongs to the protein kinase superfamily. Ser/Thr protein kinase family.

The enzyme catalyses L-seryl-[protein] + ATP = O-phospho-L-seryl-[protein] + ADP + H(+). It catalyses the reaction L-threonyl-[protein] + ATP = O-phospho-L-threonyl-[protein] + ADP + H(+). The protein is Serine/threonine-protein kinase-transforming protein mos (V-MOS) of Myeloproliferative sarcoma virus (isolate ts159).